A 157-amino-acid chain; its full sequence is uncharacterized protein (157 aa).

Residues leucine 6–leucine 26 traverse the membrane as a helical segment. One can recognise a Ricin B-type lectin domain in the interval alanine 33–proline 157.

It is found in the membrane. This is an uncharacterized protein from Mycobacterium tuberculosis (strain CDC 1551 / Oshkosh).